Here is a 609-residue protein sequence, read N- to C-terminus: MEPNVVEIATPPAASCSRIRTPTKAETPEVIDVEEYDLQNGGVPNGNNVDYKNKGKAIDFDSMSYGDYGEEDEYAVGSPGDDYGYPESSPLSNSLLDPESLIYEDDENYSEQYDFEMEAEPDNYSMYQDLFDGKDIPTGVEVSMDWFPNSADKESASSSKSSHANNGNNSSKKATKASGIHSQFSSDMETPVAQPWNALPHKAEGVIPNSAYALPQNSKAFQPPYAVHYSALKTAFSNYLQPQTPDTVLGEAPAPAAGSSGLLPPNTPGFKSNAARFKEEPPILPPDDSRVKRNMEDYLGLYLFFKRFDIVEDFSDHHYASKGTTSKQHSKDWAKRIQDEWRILEKDLPEMIFVRAYESRMDLLRAVIIGAQGTPYHDGLFFFDIFFPDTYPSTPPIVHYHSGGLRINPNLYNCGKVCLSLLGTWSGNQREKWIPNTSTMLQVLVSIQGLILNQKPYFNEPGYERSAGSAHGESTSKAYSENTFILSLKTMVYTMRRPPKYFEDFAYGHFFSCAHDVLKACNAYRNGATPGYLVKGAPDVEENSAGMSSLKFRTDVATFVETVLLKEFILLGVLGLEPEEEEKTPETIIVAESSKCTRSRSKRDRVSSS.

Disordered regions lie at residues 70-99 (EEDE…LDPE) and 151-185 (ADKE…SQFS). Positions 156–178 (ASSSKSSHANNGNNSSKKATKAS) are enriched in low complexity. Positions 332 to 492 (DWAKRIQDEW…TFILSLKTMV (161 aa)) constitute a UBC core domain. The Glycyl thioester intermediate role is filled by C418.

It belongs to the ubiquitin-conjugating enzyme family. In terms of tissue distribution, expressed in seeds, pistils, siliques, hypocotyls and leaves.

It catalyses the reaction S-ubiquitinyl-[E1 ubiquitin-activating enzyme]-L-cysteine + [E2 ubiquitin-conjugating enzyme]-L-cysteine = [E1 ubiquitin-activating enzyme]-L-cysteine + S-ubiquitinyl-[E2 ubiquitin-conjugating enzyme]-L-cysteine.. It functions in the pathway protein modification; protein ubiquitination. Accepts the ubiquitin from the E1 complex and catalyzes its covalent attachment to other proteins. This is Probable ubiquitin-conjugating enzyme E2 25 (UBC25) from Arabidopsis thaliana (Mouse-ear cress).